Reading from the N-terminus, the 644-residue chain is Threonine--tRNA ligase (644 aa).

The TGS domain occupies 1–61 (MINVTLPDGS…DGDAQVAIIT (61 aa)). Positions 243–536 (DHRKLGKQME…LIESYAGKLP (294 aa)) are catalytic. Zn(2+) is bound by residues cysteine 336, histidine 387, and histidine 513.

This sequence belongs to the class-II aminoacyl-tRNA synthetase family. In terms of assembly, homodimer. Requires Zn(2+) as cofactor.

The protein resides in the cytoplasm. The catalysed reaction is tRNA(Thr) + L-threonine + ATP = L-threonyl-tRNA(Thr) + AMP + diphosphate + H(+). Catalyzes the attachment of threonine to tRNA(Thr) in a two-step reaction: L-threonine is first activated by ATP to form Thr-AMP and then transferred to the acceptor end of tRNA(Thr). Also edits incorrectly charged L-seryl-tRNA(Thr). In Maricaulis maris (strain MCS10) (Caulobacter maris), this protein is Threonine--tRNA ligase.